Consider the following 312-residue polypeptide: Olfactory receptor 2M7 (312 aa).

Residues 1 to 25 (MAWENQTFNSDFLLLGIFNHSPTHT) are Extracellular-facing. Asparagine 5 carries N-linked (GlcNAc...) asparagine glycosylation. Residues 26-49 (FLFFLVLAIFSVAFMGNSIMVLLI) traverse the membrane as a helical segment. Residues 50 to 57 (YLDTQLHT) lie on the Cytoplasmic side of the membrane. Residues 58–79 (PMYFLLSQLSLMDLMLICTTVP) traverse the membrane as a helical segment. Over 80 to 100 (KMAFNYLSGSKSISMAGCATQ) the chain is Extracellular. Cysteine 97 and cysteine 189 form a disulfide bridge. Residues 101 to 120 (IFFYISLLGSECFLLAVMSY) form a helical membrane-spanning segment. Over 121–139 (DRYTAICHPLRYTNLMRPK) the chain is Cytoplasmic. Residues 140 to 158 (ICGLMTAFSWILGSTDGII) traverse the membrane as a helical segment. Topologically, residues 159 to 195 (DAVATFSFSYCGSREIAHFCCDFPSLLILSCNDTSIF) are extracellular. A helical transmembrane segment spans residues 196–219 (EEVIFICCIVMLVFPVAIIITSYA). Residues 220–236 (RVILAVIHMGSGEGRRK) lie on the Cytoplasmic side of the membrane. The chain crosses the membrane as a helical span at residues 237 to 259 (AFTTCSSHLMVVGMYYGAGLFMC). Topologically, residues 260–272 (IQPTSHHSPMQDK) are extracellular. Residues 273-292 (MVSVFYTIVTPMLNPLIYSL) traverse the membrane as a helical segment. Residues 293–311 (RNKEVTRALMKILGKGKSG) are Cytoplasmic-facing.

It belongs to the G-protein coupled receptor 1 family.

The protein resides in the cell membrane. Odorant receptor. This is Olfactory receptor 2M7 (OR2M7) from Homo sapiens (Human).